We begin with the raw amino-acid sequence, 816 residues long: Phosphatidylinositol 4-kinase beta (816 aa).

Disordered stretches follow at residues 1–30 (MGDTVVEPAPLKPTSEPTSGPPGNNGGSLL), 101–120 (EDEMGATVASGTAKGARRRR), and 248–318 (AHRK…SFSS). Gly2 carries the N-acetylglycine modification. The interaction with ACBD3 stretch occupies residues 2 to 68 (GDTVVEPAPL…VKLLHGGMAV (67 aa)). The 191-residue stretch at 52–242 (CQDVLEKVKL…GTKLRKLILS (191 aa)) folds into the PIK helical domain. Ser258 is subject to Phosphoserine. Thr263 is modified (phosphothreonine). A phosphoserine mark is found at Ser266, Ser275, Ser277, Ser284, and Ser294. Composition is skewed to polar residues over residues 278-297 (DATASISLSSNLKRTASNPK) and 306-318 (SSSTESIDNSFSS). Position 428 is a phosphoserine (Ser428). Phosphothreonine is present on Thr438. At Ser511 the chain carries Phosphoserine. Residues Thr517 and Thr519 each carry the phosphothreonine modification. In terms of domain architecture, PI3K/PI4K catalytic spans 535–801 (EPWQEKVRRI…MVDGSMRSIT (267 aa)). Residues 541-547 (VRRIREG) are G-loop. The catalytic loop stretch occupies residues 668–676 (QVKDRHNGN). An activation loop region spans residues 687–711 (HIDFGFILSSSPRNLGFETSAFKLT).

The protein belongs to the PI3/PI4-kinase family. Type III PI4K subfamily. As to quaternary structure, interacts with ARF1 and ARF3 in the Golgi complex, but not with ARF4, ARF5 or ARF6. Interacts with NCS1/FREQ in a calcium-independent manner. Interacts with CALN1/CABP8 and CALN2/CABP7; in a calcium-dependent manner; this interaction competes with NCS1/FREQ binding. Interacts with ACBD3. Interacts with ARMH3, YWHAB, YWHAE, YWHAG, YWHAH, YWHAQ, YWHAZ and SFN. Interacts with GGA2 (via VHS domain); the interaction is important for PI4KB location at the Golgi apparatus membrane. Interacts with ATG9A. It depends on Mg(2+) as a cofactor. The cofactor is Mn(2+).

The protein localises to the endomembrane system. Its subcellular location is the mitochondrion outer membrane. The protein resides in the rough endoplasmic reticulum membrane. It is found in the golgi apparatus. It localises to the golgi apparatus membrane. It carries out the reaction a 1,2-diacyl-sn-glycero-3-phospho-(1D-myo-inositol) + ATP = a 1,2-diacyl-sn-glycero-3-phospho-(1D-myo-inositol 4-phosphate) + ADP + H(+). Inhibited by wortmannin. Increased kinase activity upon interaction with NCS1/FREQ. Its function is as follows. Phosphorylates phosphatidylinositol (PI) in the first committed step in the production of the second messenger inositol-1,4,5,-trisphosphate (PIP). May regulate Golgi disintegration/reorganization during mitosis, possibly via its phosphorylation. Involved in Golgi-to-plasma membrane trafficking. This is Phosphatidylinositol 4-kinase beta (PI4KB) from Plecturocebus moloch (Dusky titi monkey).